The following is a 170-amino-acid chain: Ubiquitin-conjugating enzyme E2 G1 (170 aa).

Met-1 carries the post-translational modification N-acetylmethionine. At Thr-2 the chain carries N-acetylthreonine; in Ubiquitin-conjugating enzyme E2 G1, N-terminally processed. Residues 5–166 (QSALLLRRQL…VARCVRKSQE (162 aa)) enclose the UBC core domain. The Glycyl thioester intermediate role is filled by Cys-90.

It belongs to the ubiquitin-conjugating enzyme family. Post-translationally, autoubiquitinated in vitro. Widely expressed, mainly in skeletal muscle.

The catalysed reaction is S-ubiquitinyl-[E1 ubiquitin-activating enzyme]-L-cysteine + [E2 ubiquitin-conjugating enzyme]-L-cysteine = [E1 ubiquitin-activating enzyme]-L-cysteine + S-ubiquitinyl-[E2 ubiquitin-conjugating enzyme]-L-cysteine.. It participates in protein modification; protein ubiquitination. Accepts ubiquitin from the E1 complex and catalyzes its covalent attachment to other proteins. In vitro catalyzes 'Lys-48'-, as well as 'Lys-63'-linked polyubiquitination. May be involved in degradation of muscle-specific proteins. Mediates polyubiquitination of CYP3A4. The chain is Ubiquitin-conjugating enzyme E2 G1 (UBE2G1) from Homo sapiens (Human).